Reading from the N-terminus, the 196-residue chain is MIPVVIEQTSRGERSYDIYSRLLKDRIIMLTGPVEDNMANSVIAQLLFLDAQDSTKDIYLYVNTPGGSVSAGLAIVDTMNFIKADVQTIVMGMAASMGTVIASSGAKGKRFMLPNAEYMIHQPMGGTGGGTQQTDMAIAAEHLLKTRNTLEKILAENSGQSMEKVHADAERDNWMSAHETLEYGFIDEIMANNSLN.

Serine 96 functions as the Nucleophile in the catalytic mechanism. Histidine 121 is an active-site residue.

It belongs to the peptidase S14 family. Fourteen ClpP subunits assemble into 2 heptameric rings which stack back to back to give a disk-like structure with a central cavity, resembling the structure of eukaryotic proteasomes.

The protein resides in the cytoplasm. The enzyme catalyses Hydrolysis of proteins to small peptides in the presence of ATP and magnesium. alpha-casein is the usual test substrate. In the absence of ATP, only oligopeptides shorter than five residues are hydrolyzed (such as succinyl-Leu-Tyr-|-NHMec, and Leu-Tyr-Leu-|-Tyr-Trp, in which cleavage of the -Tyr-|-Leu- and -Tyr-|-Trp bonds also occurs).. Cleaves peptides in various proteins in a process that requires ATP hydrolysis. Has a chymotrypsin-like activity. Plays a major role in the degradation of misfolded proteins. The chain is ATP-dependent Clp protease proteolytic subunit from Streptococcus pneumoniae (strain P1031).